A 352-amino-acid chain; its full sequence is Protein RecA (352 aa).

67–74 (GPESSGKT) lines the ATP pocket. The segment at 333–352 (DSTPDFAVDGNDAEETEQDF) is disordered. Positions 343 to 352 (NDAEETEQDF) are enriched in acidic residues.

It belongs to the RecA family.

It localises to the cytoplasm. Can catalyze the hydrolysis of ATP in the presence of single-stranded DNA, the ATP-dependent uptake of single-stranded DNA by duplex DNA, and the ATP-dependent hybridization of homologous single-stranded DNAs. It interacts with LexA causing its activation and leading to its autocatalytic cleavage. In Klebsiella pneumoniae (strain 342), this protein is Protein RecA.